A 158-amino-acid chain; its full sequence is Pathogenesis-related protein 2 (158 aa).

Belongs to the BetVI family.

In Petroselinum crispum (Parsley), this protein is Pathogenesis-related protein 2 (PR2).